Reading from the N-terminus, the 692-residue chain is Elongation factor G (692 aa).

Positions 8 to 282 (ENTRNIGIMA…AVIDYLPSPL (275 aa)) constitute a tr-type G domain. Residues 17 to 24 (AHIDAGKT), 81 to 85 (DTPGH), and 135 to 138 (NKMD) each bind GTP.

The protein belongs to the TRAFAC class translation factor GTPase superfamily. Classic translation factor GTPase family. EF-G/EF-2 subfamily.

The protein localises to the cytoplasm. In terms of biological role, catalyzes the GTP-dependent ribosomal translocation step during translation elongation. During this step, the ribosome changes from the pre-translocational (PRE) to the post-translocational (POST) state as the newly formed A-site-bound peptidyl-tRNA and P-site-bound deacylated tRNA move to the P and E sites, respectively. Catalyzes the coordinated movement of the two tRNA molecules, the mRNA and conformational changes in the ribosome. The protein is Elongation factor G of Bacillus cereus (strain ZK / E33L).